A 108-amino-acid polypeptide reads, in one-letter code: Protein FATTY ACID EXPORT 7 (108 aa).

Transmembrane regions (helical) follow at residues Ile32 to Pro52, Pro55 to Ser75, and Pro85 to Ile105.

It belongs to the TMEM14 family.

Its subcellular location is the membrane. Its function is as follows. May be involved in free fatty acids export. The protein is Protein FATTY ACID EXPORT 7 of Arabidopsis thaliana (Mouse-ear cress).